The following is a 293-amino-acid chain: MFVSLWEFFYGHFFRFWMKWLLRQMTGKCELQRIFDTYGGAQRTYRIENSLTYSKNKVLQNATRVAQSELDRCIANIMKEKNICSEKDTSFQICMRTCLLQITGYKQLYHDVENVRKKPYDSANAQHEKMLLKLWSLLMPTKKLTARISKQWADIGFQGDDPKTDFRGMGILGLINLVYFSENYTSEAHQILSRSNHPKLGYSYAIVGINLTEMAYSLLKSEALKLHLYNFVPGVPTMEHFHQFYCYLVYEFDKFWLEEEPESIMYFNLYREKFHERIKGLLMDCNAVLTLKT.

In terms of domain architecture, ELMO spans 126–282; sequence QHEKMLLKLW…KFHERIKGLL (157 aa).

Acts as a GTPase-activating protein (GAP) toward guanine nucleotide exchange factors like ARL2, ARL3, ARF1 and ARF6, but not for GTPases outside the Arf family. The chain is ELMO domain-containing protein 2 (Elmod2) from Mus musculus (Mouse).